The chain runs to 363 residues: Flagellar P-ring protein (363 aa).

Positions 1 to 20 (MKIKVLLAVALLAMTVPVKA) are cleaved as a signal peptide.

It belongs to the FlgI family. In terms of assembly, the basal body constitutes a major portion of the flagellar organelle and consists of four rings (L,P,S, and M) mounted on a central rod.

The protein localises to the periplasm. The protein resides in the bacterial flagellum basal body. Its function is as follows. Assembles around the rod to form the L-ring and probably protects the motor/basal body from shearing forces during rotation. The sequence is that of Flagellar P-ring protein from Shewanella amazonensis (strain ATCC BAA-1098 / SB2B).